Here is a 153-residue protein sequence, read N- to C-terminus: NAD(P)H-quinone oxidoreductase subunit N (153 aa).

The protein belongs to the complex I NdhN subunit family. As to quaternary structure, NDH-1 can be composed of about 15 different subunits; different subcomplexes with different compositions have been identified which probably have different functions.

The protein localises to the cellular thylakoid membrane. The enzyme catalyses a plastoquinone + NADH + (n+1) H(+)(in) = a plastoquinol + NAD(+) + n H(+)(out). It carries out the reaction a plastoquinone + NADPH + (n+1) H(+)(in) = a plastoquinol + NADP(+) + n H(+)(out). Functionally, NDH-1 shuttles electrons from an unknown electron donor, via FMN and iron-sulfur (Fe-S) centers, to quinones in the respiratory and/or the photosynthetic chain. The immediate electron acceptor for the enzyme in this species is believed to be plastoquinone. Couples the redox reaction to proton translocation, and thus conserves the redox energy in a proton gradient. Cyanobacterial NDH-1 also plays a role in inorganic carbon-concentration. The sequence is that of NAD(P)H-quinone oxidoreductase subunit N from Synechococcus sp. (strain WH7803).